The sequence spans 263 residues: Glucosamine-6-phosphate deaminase (263 aa).

Residue Asp-67 is the Proton acceptor; for enolization step of the active site. Asn-136 acts as the For ring-opening step in catalysis. His-138 acts as the Proton acceptor; for ring-opening step in catalysis. Glu-143 (for ring-opening step) is an active-site residue.

This sequence belongs to the glucosamine/galactosamine-6-phosphate isomerase family. NagB subfamily. As to quaternary structure, homohexamer.

The enzyme catalyses alpha-D-glucosamine 6-phosphate + H2O = beta-D-fructose 6-phosphate + NH4(+). It functions in the pathway amino-sugar metabolism; N-acetylneuraminate degradation; D-fructose 6-phosphate from N-acetylneuraminate: step 5/5. Its function is as follows. Catalyzes the reversible isomerization-deamination of glucosamine 6-phosphate (GlcN6P) to form fructose 6-phosphate (Fru6P) and ammonium ion. This Shewanella halifaxensis (strain HAW-EB4) protein is Glucosamine-6-phosphate deaminase.